The following is a 497-amino-acid chain: Methionine--tRNA ligase (497 aa).

The 'HIGH' region signature appears at 14-24 (YYVNDVPHLGH). 4 residues coordinate Zn(2+): Cys129, Cys132, Cys147, and His150. The short motif at 295–299 (KMSKT) is the 'KMSKS' region element. Lys298 is an ATP binding site.

It belongs to the class-I aminoacyl-tRNA synthetase family. MetG type 2A subfamily. Monomer. Requires Zn(2+) as cofactor.

It is found in the cytoplasm. The catalysed reaction is tRNA(Met) + L-methionine + ATP = L-methionyl-tRNA(Met) + AMP + diphosphate. Is required not only for elongation of protein synthesis but also for the initiation of all mRNA translation through initiator tRNA(fMet) aminoacylation. This is Methionine--tRNA ligase (metG) from Aquifex aeolicus (strain VF5).